A 621-amino-acid chain; its full sequence is KIF-binding protein (621 aa).

The tract at residues 51–75 (GPAPEDEDERPEAEDGPGAGDHALG) is disordered. Residues 54 to 65 (PEDEDERPEAED) show a composition bias toward acidic residues. At S178 the chain carries Phosphoserine.

Belongs to the KIF-binding protein family. In terms of assembly, interacts with KIF1B; positively regulates KIF1B microtubule motor activity. Interacts with STMN2. As to expression, highly expressed in heart, brain, ovary, testis, spinal cord and all specific brain regions examined. Moderate expressed at intermediate level in all other adult tissues examined, as well as in fetal liver and brain. Not expressed in blood leukocytes.

It is found in the cytoplasm. The protein localises to the cytoskeleton. Activator of KIF1B plus-end-directed microtubule motor activity. Required for organization of axonal microtubules, and axonal outgrowth and maintenance during peripheral and central nervous system development. The protein is KIF-binding protein of Homo sapiens (Human).